The chain runs to 151 residues: S-ribosylhomocysteine lyase (151 aa).

Residues H54, H58, and C121 each coordinate Fe cation.

It belongs to the LuxS family. In terms of assembly, homodimer. The cofactor is Fe cation.

It carries out the reaction S-(5-deoxy-D-ribos-5-yl)-L-homocysteine = (S)-4,5-dihydroxypentane-2,3-dione + L-homocysteine. Involved in the synthesis of autoinducer 2 (AI-2) which is secreted by bacteria and is used to communicate both the cell density and the metabolic potential of the environment. The regulation of gene expression in response to changes in cell density is called quorum sensing. Catalyzes the transformation of S-ribosylhomocysteine (RHC) to homocysteine (HC) and 4,5-dihydroxy-2,3-pentadione (DPD). This chain is S-ribosylhomocysteine lyase, found in Clostridioides difficile (strain 630) (Peptoclostridium difficile).